A 299-amino-acid chain; its full sequence is Acidic endochitinase Pun g 14, amyloplastic (299 aa).

The N-terminal 26 residues, 1 to 26, are a transit peptide targeting the amyloplast; it reads MAKTLPFSRALLLSLSILLVARAISA. One can recognise a GH18 domain in the interval 27 to 299; sequence GDIAIYWGQN…TYSTTIKDQV (273 aa). Cystine bridges form between cysteine 46/cysteine 93 and cysteine 76/cysteine 83. Catalysis depends on glutamate 153, which acts as the Proton donor. A disulfide bond links cysteine 185 and cysteine 216.

Belongs to the glycosyl hydrolase 18 family. Chitinase class III subfamily. Monomer. Highly expressed in seeds and to a lesser extent in the skin of the pomegranate fruit (at protein level). Not expressed in leaves or flesh of the fruit (at protein level).

It is found in the plastid. The protein resides in the amyloplast. The catalysed reaction is Random endo-hydrolysis of N-acetyl-beta-D-glucosaminide (1-&gt;4)-beta-linkages in chitin and chitodextrins.. Activity is not affected by addition of 10 mM Ca(2+) or removal of Ca(2+). In terms of biological role, hydrolyzes chitin. Probable calcium storage protein of the seeds. Binds calcium ions with high capacity and low affinity. Involved in seed germination. This chain is Acidic endochitinase Pun g 14, amyloplastic, found in Punica granatum (Pomegranate).